A 230-amino-acid chain; its full sequence is 3-beta-hydroxysteroid-Delta(8),Delta(7)-isomerase (230 aa).

Threonine 2 carries the N-acetylthreonine modification. The next 4 helical transmembrane spans lie at 29–49 (WHIL…TWLL), 66–86 (LCWF…FVLY), 121–141 (METI…IAFL), and 185–205 (FWFY…VLVL). The EXPERA domain occupies 61 to 204 (WRRLSLCWFA…LWLVLPGVLV (144 aa)).

Belongs to the EBP family.

The protein resides in the endoplasmic reticulum membrane. It is found in the nucleus envelope. The protein localises to the cytoplasmic vesicle. It catalyses the reaction lathosterol = 5alpha-cholest-8-en-3beta-ol. It carries out the reaction zymosterol = 5alpha-cholesta-7,24-dien-3beta-ol. The enzyme catalyses 5,6alpha-epoxy-5alpha-cholestan-3beta-ol + H2O = 5alpha-cholestane-3beta,5,6beta-triol. The catalysed reaction is 5,6beta-epoxy-5beta-cholestan-3beta-ol + H2O = 5alpha-cholestane-3beta,5,6beta-triol. Its pathway is steroid biosynthesis; cholesterol biosynthesis. With respect to regulation, cholestenol Delta-isomerase and cholesterol-5,6-epoxide hydrolase (ChEH) activities are inhibited by tamoxifen and the selective AEBS ligand (4-benzyl-phenoxy)-ethyl-N-pyrrolidine (PBPE). ChEH activity is inhibited by oleic acid. Isomerase that catalyzes the conversion of Delta(8)-sterols to their corresponding Delta(7)-isomers a catalytic step in the postlanosterol biosynthesis of cholesterol. Its function is as follows. Component of the microsomal antiestrogen binding site (AEBS), a multiproteic complex at the ER membrane that consists of an association between EBP and 7-dehydrocholesterol reductase/DHCR7. This complex is responsible for cholesterol-5,6-epoxide hydrolase (ChEH) activity, which consists in the hydration of cholesterol-5,6-epoxides (5,6-EC) into cholestane-3beta,5alpha,6beta-triol (CT). The precise role of each component of this complex has not been described yet. The chain is 3-beta-hydroxysteroid-Delta(8),Delta(7)-isomerase from Homo sapiens (Human).